The primary structure comprises 123 residues: UPF0102 protein Cbei_1183 (123 aa).

The protein belongs to the UPF0102 family.

This is UPF0102 protein Cbei_1183 from Clostridium beijerinckii (strain ATCC 51743 / NCIMB 8052) (Clostridium acetobutylicum).